Here is a 102-residue protein sequence, read N- to C-terminus: Small ribosomal subunit protein uS10 (102 aa).

This sequence belongs to the universal ribosomal protein uS10 family. In terms of assembly, part of the 30S ribosomal subunit.

Its function is as follows. Involved in the binding of tRNA to the ribosomes. The protein is Small ribosomal subunit protein uS10 of Mycoplasma mobile (strain ATCC 43663 / 163K / NCTC 11711) (Mesomycoplasma mobile).